Here is a 456-residue protein sequence, read N- to C-terminus: Dothistromin biosynthesis regulatory protein aflJ (456 aa).

Positions 74–143 constitute an HTH iclR-type domain; it reads LARENQLLAC…PKPGYVAHSG (70 aa). A DNA-binding region (H-T-H motif) is located at residues 104-123; the sequence is YSDVADLACVPVDQLRRIAR. Positions 290–300 are enriched in polar residues; that stretch reads KLHNGLSTPPE. Positions 290 to 314 are disordered; it reads KLHNGLSTPPESDTGPAARAAKASE.

The protein localises to the nucleus. Functionally, transcription coactivator involved in regulation of the dothistromin biosynthesis gene cluster with aflR. This chain is Dothistromin biosynthesis regulatory protein aflJ, found in Dothistroma septosporum (strain NZE10 / CBS 128990) (Red band needle blight fungus).